A 123-amino-acid polypeptide reads, in one-letter code: NADH-quinone oxidoreductase subunit A (123 aa).

Transmembrane regions (helical) follow at residues 11–31 (FPVL…VSIG), 67–87 (LVAI…PWGV), and 92–112 (IGWP…LGFA).

This sequence belongs to the complex I subunit 3 family. NDH-1 is composed of 14 different subunits. Subunits NuoA, H, J, K, L, M, N constitute the membrane sector of the complex.

It localises to the cell inner membrane. It catalyses the reaction a quinone + NADH + 5 H(+)(in) = a quinol + NAD(+) + 4 H(+)(out). Its function is as follows. NDH-1 shuttles electrons from NADH, via FMN and iron-sulfur (Fe-S) centers, to quinones in the respiratory chain. The immediate electron acceptor for the enzyme in this species is believed to be ubiquinone. Couples the redox reaction to proton translocation (for every two electrons transferred, four hydrogen ions are translocated across the cytoplasmic membrane), and thus conserves the redox energy in a proton gradient. In Paraburkholderia phymatum (strain DSM 17167 / CIP 108236 / LMG 21445 / STM815) (Burkholderia phymatum), this protein is NADH-quinone oxidoreductase subunit A.